We begin with the raw amino-acid sequence, 91 residues long: Progonadoliberin-1 (91 aa).

The signal sequence occupies residues 1 to 21 (MVVKTWMPWLLVSSVLSQGCC). Q22 carries the pyrrolidone carboxylic acid modification. Residue G31 is modified to Glycine amide.

The protein belongs to the GnRH family. As to expression, expressed in the cell bodies of a cluster of neurons in the preoptic region.

The protein resides in the secreted. Functionally, stimulates the secretion of gonadotropins. In Oryzias latipes (Japanese rice fish), this protein is Progonadoliberin-1 (gnrh1).